Here is a 302-residue protein sequence, read N- to C-terminus: Phospho-N-acetylmuramoyl-pentapeptide-transferase (302 aa).

Transmembrane regions (helical) follow at residues 1 to 21, 42 to 62, 67 to 87, 95 to 115, 123 to 143, 154 to 174, 178 to 198, 204 to 224, 229 to 249, and 279 to 299; these read MIAA…KLFR, GTPT…GMIS, MVLL…FLSV, LKTY…LLLI, FFGS…LVIV, GLDG…WFFL, GVSE…LVFN, IFMG…VSVL, FYLV…ILQV, and IVAV…EIFG.

The protein belongs to the glycosyltransferase 4 family. MraY subfamily. The cofactor is Mg(2+).

It is found in the cell inner membrane. The enzyme catalyses UDP-N-acetyl-alpha-D-muramoyl-L-alanyl-gamma-D-glutamyl-meso-2,6-diaminopimeloyl-D-alanyl-D-alanine + di-trans,octa-cis-undecaprenyl phosphate = di-trans,octa-cis-undecaprenyl diphospho-N-acetyl-alpha-D-muramoyl-L-alanyl-D-glutamyl-meso-2,6-diaminopimeloyl-D-alanyl-D-alanine + UMP. Its pathway is cell wall biogenesis; peptidoglycan biosynthesis. In terms of biological role, catalyzes the initial step of the lipid cycle reactions in the biosynthesis of the cell wall peptidoglycan: transfers peptidoglycan precursor phospho-MurNAc-pentapeptide from UDP-MurNAc-pentapeptide onto the lipid carrier undecaprenyl phosphate, yielding undecaprenyl-pyrophosphoryl-MurNAc-pentapeptide, known as lipid I. This chain is Phospho-N-acetylmuramoyl-pentapeptide-transferase, found in Thermotoga maritima (strain ATCC 43589 / DSM 3109 / JCM 10099 / NBRC 100826 / MSB8).